A 212-amino-acid chain; its full sequence is Interleukin-6 (212 aa).

The signal sequence occupies residues 1-27 (MNSVSTSAFGPVAFSLGLLLVLPAAFP). A disulfide bridge links C72 with C78. An N-linked (GlcNAc...) asparagine glycan is attached at N73. At S81 the chain carries Phosphoserine. A disulfide bridge connects residues C101 and C111. A glycan (N-linked (GlcNAc...) asparagine) is linked at N172.

Belongs to the IL-6 superfamily. As to quaternary structure, component of a hexamer of two molecules each of IL6, IL6R and IL6ST; first binds to IL6R to associate with the signaling subunit IL6ST. Interacts with IL6R (via the N-terminal ectodomain); this interaction may be affected by IL6R-binding with SORL1, hence decreasing IL6 cis signaling. Interacts with SORL1 (via the N-terminal ectodomain); this interaction leads to IL6 internalization and lysosomal degradation. May form a trimeric complex with the soluble SORL1 ectodomain and soluble IL6R receptor; this interaction might stabilize circulating IL6, hence promoting IL6 trans signaling.

The protein localises to the secreted. Cytokine with a wide variety of biological functions in immunity, tissue regeneration, and metabolism. Binds to IL6R, then the complex associates to the signaling subunit IL6ST/gp130 to trigger the intracellular IL6-signaling pathway. The interaction with the membrane-bound IL6R and IL6ST stimulates 'classic signaling', whereas the binding of IL6 and soluble IL6R to IL6ST stimulates 'trans-signaling'. Alternatively, 'cluster signaling' occurs when membrane-bound IL6:IL6R complexes on transmitter cells activate IL6ST receptors on neighboring receiver cells. In terms of biological role, IL6 is a potent inducer of the acute phase response. Rapid production of IL6 contributes to host defense during infection and tissue injury, but excessive IL6 synthesis is involved in disease pathology. In the innate immune response, is synthesized by myeloid cells, such as macrophages and dendritic cells, upon recognition of pathogens through toll-like receptors (TLRs) at the site of infection or tissue injury. In the adaptive immune response, is required for the differentiation of B cells into immunoglobulin-secreting cells. Plays a major role in the differentiation of CD4(+) T cell subsets. Essential factor for the development of T follicular helper (Tfh) cells that are required for the induction of germinal-center formation. Required to drive naive CD4(+) T cells to the Th17 lineage. Also required for proliferation of myeloma cells and the survival of plasmablast cells. Functionally, acts as an essential factor in bone homeostasis and on vessels directly or indirectly by induction of VEGF, resulting in increased angiogenesis activity and vascular permeability. Induces, through 'trans-signaling' and synergistically with IL1B and TNF, the production of VEGF. Involved in metabolic controls, is discharged into the bloodstream after muscle contraction increasing lipolysis and improving insulin resistance. 'Trans-signaling' in central nervous system also regulates energy and glucose homeostasis. Mediates, through GLP-1, crosstalk between insulin-sensitive tissues, intestinal L cells and pancreatic islets to adapt to changes in insulin demand. Also acts as a myokine. Plays a protective role during liver injury, being required for maintenance of tissue regeneration. Also has a pivotal role in iron metabolism by regulating HAMP/hepcidin expression upon inflammation or bacterial infection. Through activation of IL6ST-YAP-NOTCH pathway, induces inflammation-induced epithelial regeneration. This Macaca thibetana (Pere David's macaque) protein is Interleukin-6 (IL6).